Reading from the N-terminus, the 327-residue chain is Phenylalanine--tRNA ligase alpha subunit (327 aa).

Glu252 is a binding site for Mg(2+).

It belongs to the class-II aminoacyl-tRNA synthetase family. Phe-tRNA synthetase alpha subunit type 1 subfamily. Tetramer of two alpha and two beta subunits. Requires Mg(2+) as cofactor.

The protein resides in the cytoplasm. The enzyme catalyses tRNA(Phe) + L-phenylalanine + ATP = L-phenylalanyl-tRNA(Phe) + AMP + diphosphate + H(+). This Shigella dysenteriae serotype 1 (strain Sd197) protein is Phenylalanine--tRNA ligase alpha subunit.